Consider the following 180-residue polypeptide: Large ribosomal subunit protein uL10 (180 aa).

It belongs to the universal ribosomal protein uL10 family. Part of the ribosomal stalk of the 50S ribosomal subunit. The N-terminus interacts with L11 and the large rRNA to form the base of the stalk. The C-terminus forms an elongated spine to which L12 dimers bind in a sequential fashion forming a multimeric L10(L12)X complex.

Functionally, forms part of the ribosomal stalk, playing a central role in the interaction of the ribosome with GTP-bound translation factors. The protein is Large ribosomal subunit protein uL10 of Thermosipho melanesiensis (strain DSM 12029 / CIP 104789 / BI429).